Reading from the N-terminus, the 328-residue chain is MIFSILEHILTHISFSVVSIVLTIYFLTLLVNLDEIIGFFDSSDKGIIITFFGITGLLLTRWIYSGHFPLSNLYESLIFLSWAFSIIHMVSYFNKKQQNKLNTITAPSVIFIQGFATSGLLNKMPQSAILVPALQSQWLMMHVSMMILGYGALLCGSLLSIALLVITFRKVGPTFWKKNIKKNFLLNELFSFDVLYYINERNSILLQQNINFSFSRNYYRYQLIQQLDFWSFRIISLGFIFLTVGILSGAVWANETWGSYWNWDPKETWAFITWTIFAIYLHIKTNRNVRGINSAIVALIGFILIWICYFGVNLLGIGLHSYGSFTSN.

Helical transmembrane passes span 13 to 33 (ISFSVVSIVLTIYFLTLLVNL), 46 to 66 (GIIITFFGITGLLLTRWIYSG), 73 to 93 (LYESLIFLSWAFSIIHMVSYF), 101 to 121 (LNTITAPSVIFIQGFATSGLL), 146 to 166 (MILGYGALLCGSLLSIALLVI), 234 to 254 (IISLGFIFLTVGILSGAVWAN), 263 to 283 (WDPKETWAFITWTIFAIYLHI), and 295 to 315 (AIVALIGFILIWICYFGVNLL).

It belongs to the CcmF/CycK/Ccl1/NrfE/CcsA family. As to quaternary structure, may interact with Ccs1.

Its subcellular location is the plastid. The protein localises to the chloroplast thylakoid membrane. Functionally, required during biogenesis of c-type cytochromes (cytochrome c6 and cytochrome f) at the step of heme attachment. This chain is Cytochrome c biogenesis protein CcsA, found in Arabidopsis thaliana (Mouse-ear cress).